The following is a 347-amino-acid chain: GMP reductase (347 aa).

108–131 contacts NADP(+); sequence ADFEKTKQILDLNPALNFVCIDVA. The K(+) site is built by glycine 181 and glycine 183. Cysteine 186 functions as the Thioimidate intermediate in the catalytic mechanism. 216–239 contacts NADP(+); sequence IVSDGGCTTPGDVAKAFGGGADFV.

The protein belongs to the IMPDH/GMPR family. GuaC type 1 subfamily. In terms of assembly, homotetramer.

The catalysed reaction is IMP + NH4(+) + NADP(+) = GMP + NADPH + 2 H(+). Its function is as follows. Catalyzes the irreversible NADPH-dependent deamination of GMP to IMP. It functions in the conversion of nucleobase, nucleoside and nucleotide derivatives of G to A nucleotides, and in maintaining the intracellular balance of A and G nucleotides. The chain is GMP reductase from Shigella dysenteriae serotype 1 (strain Sd197).